A 907-amino-acid chain; its full sequence is Protein translocase subunit SecA (907 aa).

Residues Gln-87, 105–109 (GEGKT), and Asp-512 each bind ATP. Residues 834–907 (QEDVERMEEQ…KKYKQCHGKI (74 aa)) are disordered. 2 stretches are compositionally biased toward basic and acidic residues: residues 836-853 (DVER…EAAR) and 873-888 (EEAH…KVGR). The Zn(2+) site is built by Cys-892, Cys-894, Cys-903, and His-904. The span at 898–907 (KKYKQCHGKI) shows a compositional bias: basic residues.

This sequence belongs to the SecA family. In terms of assembly, monomer and homodimer. Part of the essential Sec protein translocation apparatus which comprises SecA, SecYEG and auxiliary proteins SecDF-YajC and YidC. The cofactor is Zn(2+).

It is found in the cell inner membrane. The protein localises to the cytoplasm. The catalysed reaction is ATP + H2O + cellular proteinSide 1 = ADP + phosphate + cellular proteinSide 2.. Its function is as follows. Part of the Sec protein translocase complex. Interacts with the SecYEG preprotein conducting channel. Has a central role in coupling the hydrolysis of ATP to the transfer of proteins into and across the cell membrane, serving both as a receptor for the preprotein-SecB complex and as an ATP-driven molecular motor driving the stepwise translocation of polypeptide chains across the membrane. In Aliivibrio fischeri (strain ATCC 700601 / ES114) (Vibrio fischeri), this protein is Protein translocase subunit SecA.